The chain runs to 364 residues: Probable dual-specificity RNA methyltransferase RlmN (364 aa).

The active-site Proton acceptor is glutamate 106. The Radical SAM core domain maps to 112–350 (YPQRNTVCIS…SCTVRDTRGR (239 aa)). Cysteine 119 and cysteine 356 are joined by a disulfide. 3 residues coordinate [4Fe-4S] cluster: cysteine 126, cysteine 130, and cysteine 133. S-adenosyl-L-methionine contacts are provided by residues 177–178 (GE), serine 211, 234–236 (SLH), and asparagine 313. Catalysis depends on cysteine 356, which acts as the S-methylcysteine intermediate.

Belongs to the radical SAM superfamily. RlmN family. It depends on [4Fe-4S] cluster as a cofactor.

The protein resides in the cytoplasm. The catalysed reaction is adenosine(2503) in 23S rRNA + 2 reduced [2Fe-2S]-[ferredoxin] + 2 S-adenosyl-L-methionine = 2-methyladenosine(2503) in 23S rRNA + 5'-deoxyadenosine + L-methionine + 2 oxidized [2Fe-2S]-[ferredoxin] + S-adenosyl-L-homocysteine. It carries out the reaction adenosine(37) in tRNA + 2 reduced [2Fe-2S]-[ferredoxin] + 2 S-adenosyl-L-methionine = 2-methyladenosine(37) in tRNA + 5'-deoxyadenosine + L-methionine + 2 oxidized [2Fe-2S]-[ferredoxin] + S-adenosyl-L-homocysteine. Specifically methylates position 2 of adenine 2503 in 23S rRNA and position 2 of adenine 37 in tRNAs. This Mycobacterium ulcerans (strain Agy99) protein is Probable dual-specificity RNA methyltransferase RlmN.